The primary structure comprises 457 residues: Multidrug resistance protein MdtK (457 aa).

A run of 12 helical transmembrane segments spans residues 11 to 31 (LLAL…MGFV), 53 to 73 (IWLP…PVIA), 93 to 113 (WLAG…GYII), 127 to 147 (AVGY…FQVA), 160 to 180 (GMVM…IFIY), 188 to 208 (LGGI…FIAM), 243 to 263 (LPIA…ALLV), 276 to 296 (IALN…AAVT), 314 to 334 (AART…IFTV), 350 to 370 (VVAL…SDSI), 387 to 407 (IFFI…YILA), and 418 to 438 (PAGF…LMML).

This sequence belongs to the multi antimicrobial extrusion (MATE) (TC 2.A.66.1) family. MdtK subfamily.

It localises to the cell inner membrane. Functionally, multidrug efflux pump that functions probably as a Na(+)/drug antiporter. This chain is Multidrug resistance protein MdtK, found in Salmonella newport (strain SL254).